The following is a 283-amino-acid chain: Extensin (283 aa).

Positions 1 to 24 are cleaved as a signal peptide; sequence MMGGKAALLLALVAVTLAVVEIQA. The interval 27–283 is disordered; it reads GYGYGGGYPT…PPPPPPPPYY (257 aa). Over residues 36-45 the composition is skewed to pro residues; sequence TPTPKPPAKG. The segment covering 46–69 has biased composition (basic and acidic residues); it reads PKPEKPPTKGHGHKPEKPPKEHKP. Pro residues-rich tracts occupy residues 70-264 and 272-283; these read TPPT…PTYT and SSPPPPPPPPYY.

In terms of processing, hydroxylated on proline residues in the S-P-P-P-P repeat. O-glycosylated on hydroxyprolines.

It is found in the secreted. Its subcellular location is the primary cell wall. Structural component in primary cell wall. In Sorghum bicolor (Sorghum), this protein is Extensin (HRGP).